We begin with the raw amino-acid sequence, 362 residues long: 3-dehydroquinate synthase (362 aa).

NAD(+)-binding positions include 71–76 (DGEQYK), 105–109 (GVVGD), 129–130 (TT), lysine 142, lysine 151, and 169–172 (CLKT). Residues glutamate 184, histidine 247, and histidine 264 each contribute to the Zn(2+) site.

It belongs to the sugar phosphate cyclases superfamily. Dehydroquinate synthase family. Co(2+) is required as a cofactor. Zn(2+) serves as cofactor. It depends on NAD(+) as a cofactor.

The protein resides in the cytoplasm. It carries out the reaction 7-phospho-2-dehydro-3-deoxy-D-arabino-heptonate = 3-dehydroquinate + phosphate. Its pathway is metabolic intermediate biosynthesis; chorismate biosynthesis; chorismate from D-erythrose 4-phosphate and phosphoenolpyruvate: step 2/7. Catalyzes the conversion of 3-deoxy-D-arabino-heptulosonate 7-phosphate (DAHP) to dehydroquinate (DHQ). The chain is 3-dehydroquinate synthase from Escherichia coli (strain 55989 / EAEC).